A 91-amino-acid chain; its full sequence is uncharacterized protein (91 aa).

This is an uncharacterized protein from Kluyveromyces lactis (strain ATCC 8585 / CBS 2359 / DSM 70799 / NBRC 1267 / NRRL Y-1140 / WM37) (Yeast).